Consider the following 255-residue polypeptide: CCAAT/enhancer-binding protein delta (255 aa).

Disordered stretches follow at residues methionine 1–alanine 42, glycine 91–leucine 121, and proline 138–glutamine 206. Lysine 107 is covalently cross-linked (Glycyl lysine isopeptide (Lys-Gly) (interchain with G-Cter in SUMO)). The segment covering glutamine 141 to glycine 161 has biased composition (pro residues). Residues alanine 163–asparagine 187 are compositionally biased toward basic and acidic residues. Residues serine 177–leucine 240 enclose the bZIP domain. The tract at residues arginine 181–lysine 208 is basic motif. The tract at residues leucine 212–leucine 240 is leucine-zipper.

It belongs to the bZIP family. C/EBP subfamily. Binds DNA as a homodimer and as a heterodimer. Can form stable heterodimers with CEBPA, CEBPB and CEBPE. Directly interacts with SPI1/PU.1; this interaction does not affect DNA-binding properties of each partner. Interacts with PRDM16.

The protein resides in the nucleus. Transcription activator that recognizes two different DNA motifs: the CCAAT homology common to many promoters and the enhanced core homology common to many enhancers. Important transcription factor regulating the expression of genes involved in immune and inflammatory responses. Transcriptional activator that enhances IL6 transcription alone and as heterodimer with CEBPB. This Ovis aries (Sheep) protein is CCAAT/enhancer-binding protein delta (CEBPD).